The following is a 436-amino-acid chain: Bifunctional protein GlmU (436 aa).

Residues 1–226 form a pyrophosphorylase region; that stretch reads MNEISIIILA…ETNFMGINDK (226 aa). UDP-N-acetyl-alpha-D-glucosamine is bound by residues 9-12, K23, Q75, and 82-83; these read LAAG and GT. A Mg(2+)-binding site is contributed by D105. Residues G138, E152, N167, and N224 each contribute to the UDP-N-acetyl-alpha-D-glucosamine site. Residue N224 coordinates Mg(2+). Positions 227–247 are linker; the sequence is FALSIAEEIMQNRIKENLMKN. The N-acetyltransferase stretch occupies residues 248 to 436; that stretch reads GVIMSLPDTI…YKFFGKNDEK (189 aa). R311 and K328 together coordinate UDP-N-acetyl-alpha-D-glucosamine. The Proton acceptor role is filled by H339. UDP-N-acetyl-alpha-D-glucosamine contacts are provided by Y342 and N353. Residues 362 to 363, S381, A399, and R416 each bind acetyl-CoA; that span reads NY.

This sequence in the N-terminal section; belongs to the N-acetylglucosamine-1-phosphate uridyltransferase family. It in the C-terminal section; belongs to the transferase hexapeptide repeat family. In terms of assembly, homotrimer. Requires Mg(2+) as cofactor.

The protein resides in the cytoplasm. It carries out the reaction alpha-D-glucosamine 1-phosphate + acetyl-CoA = N-acetyl-alpha-D-glucosamine 1-phosphate + CoA + H(+). It catalyses the reaction N-acetyl-alpha-D-glucosamine 1-phosphate + UTP + H(+) = UDP-N-acetyl-alpha-D-glucosamine + diphosphate. Its pathway is nucleotide-sugar biosynthesis; UDP-N-acetyl-alpha-D-glucosamine biosynthesis; N-acetyl-alpha-D-glucosamine 1-phosphate from alpha-D-glucosamine 6-phosphate (route II): step 2/2. The protein operates within nucleotide-sugar biosynthesis; UDP-N-acetyl-alpha-D-glucosamine biosynthesis; UDP-N-acetyl-alpha-D-glucosamine from N-acetyl-alpha-D-glucosamine 1-phosphate: step 1/1. It functions in the pathway bacterial outer membrane biogenesis; LPS lipid A biosynthesis. Functionally, catalyzes the last two sequential reactions in the de novo biosynthetic pathway for UDP-N-acetylglucosamine (UDP-GlcNAc). The C-terminal domain catalyzes the transfer of acetyl group from acetyl coenzyme A to glucosamine-1-phosphate (GlcN-1-P) to produce N-acetylglucosamine-1-phosphate (GlcNAc-1-P), which is converted into UDP-GlcNAc by the transfer of uridine 5-monophosphate (from uridine 5-triphosphate), a reaction catalyzed by the N-terminal domain. The chain is Bifunctional protein GlmU from Campylobacter fetus subsp. fetus (strain 82-40).